Consider the following 101-residue polypeptide: Transcription factor ILI2 (101 aa).

A disordered region spans residues 1-22 (MSSSRRSRTSSRLAAAPPPTDE). One can recognise a bHLH domain in the interval 8–63 (RTSSRLAAAPPPTDEQMAELISKLQAVLPTRGGEANAKQASSAEVLQEACRYIRRL).

The protein belongs to the bHLH protein family.

Its function is as follows. Atypical and probable non DNA-binding bHLH transcription factor that integrates multiple signaling pathways to regulate cell elongation and plant development. The sequence is that of Transcription factor ILI2 (ILI2) from Oryza sativa subsp. indica (Rice).